The sequence spans 587 residues: Tripartite motif-containing protein 29 (587 aa).

A disordered region spans residues 1-71 (MEGADACRSN…SGEGKSGLFS (71 aa)). Phosphoserine occurs at positions 21, 28, 58, and 104. Tyr-106 is subject to Phosphotyrosine. Residues 220-260 (FEARKCPLHGKTMELFCQTDQTCICYLCMFQEHKNHSTVTV) form a B box-type zinc finger. Zn(2+)-binding residues include Cys-225, His-228, Cys-247, and His-252. The stretch at 259 to 348 (TVEEAKAEKE…AVDQVKVIVD (90 aa)) forms a coiled coil. Position 476 is a phosphothreonine (Thr-476). Residue Ser-489 is modified to Phosphoserine.

In terms of assembly, interacts with VIM and HINT1. Interacts with IKBKG/NEMO. Interacts with STING1.

The protein resides in the cytoplasm. It is found in the lysosome. Functionally, plays a crucial role in the regulation of macrophage activation in response to viral or bacterial infections within the respiratory tract. Mechanistically, TRIM29 interacts with IKBKG/NEMO in the lysosome where it induces its 'Lys-48' ubiquitination and subsequent degradation. In turn, the expression of type I interferons and the production of pro-inflammatory cytokines are inhibited. Additionally, induces the 'Lys-48' ubiquitination of STING1 in a similar way, leading to its degradation. The polypeptide is Tripartite motif-containing protein 29 (Trim29) (Mus musculus (Mouse)).